Here is a 444-residue protein sequence, read N- to C-terminus: Jacalin-related lectin 42 (444 aa).

Ala2 carries the post-translational modification N-acetylalanine. Jacalin-type lectin domains follow at residues 2–143 (ALMV…YYIR), 146–289 (ATKS…YYAP), and 297–441 (TEKL…HVIP).

Belongs to the jacalin lectin family.

This is Jacalin-related lectin 42 (JAL42) from Arabidopsis thaliana (Mouse-ear cress).